A 410-amino-acid chain; its full sequence is Methylamine dehydrogenase heavy chain (410 aa).

The first 35 residues, 1–35 (MTHAYTKVRQALCYGSATLGAAALAALIAAGSAAA), serve as a signal peptide directing secretion.

Belongs to the aromatic amine dehydrogenase heavy chain family. Tetramer of two light and two heavy chains.

It is found in the periplasm. The enzyme catalyses 2 oxidized [amicyanin] + methylamine + H2O = 2 reduced [amicyanin] + formaldehyde + NH4(+) + 2 H(+). Methylamine dehydrogenase carries out the oxidation of methylamine. Electrons are passed from methylamine dehydrogenase to amicyanin. The polypeptide is Methylamine dehydrogenase heavy chain (mauB) (Methylorubrum extorquens (strain ATCC 14718 / DSM 1338 / JCM 2805 / NCIMB 9133 / AM1) (Methylobacterium extorquens)).